A 290-amino-acid polypeptide reads, in one-letter code: MITSPTTWPSPAKLNLFLYINGRTDNGYHELQTLFQFLDHGDQLTITANDSGHITLTPDIVDLPVEQNLIWKAANALQKKTGCTLGANIHLNKILPMGGGIGGGSSNAATALVALNFLWQLGLSDDELADIGLKLGADVPVFVRGHAAFAEGVGEKLTPAQPEEKWYLVVRPDVHIATVDIFTHPQLTRNTPKRSLETLLDSEYGNDCEKIVRMIHPKVDKQLSWLLQYAPSRLTGTGSCVFAEFNSRSEAESILAQLSDNVSAFVAQGRNISPLKETLADYLSAQNRPI.

Residue lysine 13 is part of the active site. Proline 96–serine 106 serves as a coordination point for ATP. Aspartate 138 is an active-site residue.

Belongs to the GHMP kinase family. IspE subfamily.

The catalysed reaction is 4-CDP-2-C-methyl-D-erythritol + ATP = 4-CDP-2-C-methyl-D-erythritol 2-phosphate + ADP + H(+). It participates in isoprenoid biosynthesis; isopentenyl diphosphate biosynthesis via DXP pathway; isopentenyl diphosphate from 1-deoxy-D-xylulose 5-phosphate: step 3/6. Catalyzes the phosphorylation of the position 2 hydroxy group of 4-diphosphocytidyl-2C-methyl-D-erythritol. This Vibrio vulnificus (strain CMCP6) protein is 4-diphosphocytidyl-2-C-methyl-D-erythritol kinase.